We begin with the raw amino-acid sequence, 223 residues long: Cytidylate kinase (223 aa).

Glycine 12–threonine 20 is a binding site for ATP.

This sequence belongs to the cytidylate kinase family. Type 1 subfamily.

The protein resides in the cytoplasm. The enzyme catalyses CMP + ATP = CDP + ADP. It carries out the reaction dCMP + ATP = dCDP + ADP. This Xylella fastidiosa (strain 9a5c) protein is Cytidylate kinase.